Here is a 277-residue protein sequence, read N- to C-terminus: Membrane protein insertase YidC 2 (277 aa).

An N-terminal signal peptide occupies residues M1–G22. The N-palmitoyl cysteine moiety is linked to residue C23. C23 carries S-diacylglycerol cysteine lipidation. 5 consecutive transmembrane segments (helical) span residues F35 to F55, G60 to F80, A130 to W150, P170 to M190, and P208 to I228. Over residues E251–K266 the composition is skewed to basic and acidic residues. Residues E251–R277 form a disordered region. Positions A267 to R277 are enriched in basic residues.

It belongs to the OXA1/ALB3/YidC family. Type 2 subfamily.

The protein localises to the cell membrane. Functionally, required for the insertion and/or proper folding and/or complex formation of integral membrane proteins into the membrane. Involved in integration of membrane proteins that insert both dependently and independently of the Sec translocase complex, as well as at least some lipoproteins. This Lactiplantibacillus plantarum (strain ATCC BAA-793 / NCIMB 8826 / WCFS1) (Lactobacillus plantarum) protein is Membrane protein insertase YidC 2.